Consider the following 614-residue polypeptide: ATP-dependent rRNA helicase SPB4 (614 aa).

The Q motif motif lies at 10–38 (WSVLKCDLHPWIKEAIKSLGYPTMTPVQA). A Helicase ATP-binding domain is found at 41 to 233 (IPLFSGNKDV…RTGMANPVKI (193 aa)). 54–61 (AVTGSGKT) contacts ATP. The short motif at 181–184 (DEAD) is the DEAD box element. The 172-residue stretch at 260–431 (KISALIALIK…KFQKKFRKYM (172 aa)) folds into the Helicase C-terminal domain. Residues 510-581 (EYADKQKEES…IEKQLMDDSS (72 aa)) are a coiled coil. The segment covering 514–529 (KQKEESRKKNLEEDKA) has biased composition (basic and acidic residues). The segment at 514–614 (KQKEESRKKN…DSMQGSFDDL (101 aa)) is disordered. Residues 530 to 541 (RKVHDAKKRKEL) are compositionally biased toward basic residues. Composition is skewed to basic and acidic residues over residues 551-563 (KTDK…ERRE) and 584-595 (EETKVDWKEMVK). Residues 604–614 (SDSMQGSFDDL) show a composition bias toward polar residues.

It belongs to the DEAD box helicase family. DDX55/SPB4 subfamily. As to quaternary structure, component of pre-60S ribosomal complexes.

The protein resides in the nucleus. It localises to the nucleolus. The catalysed reaction is ATP + H2O = ADP + phosphate + H(+). Its function is as follows. ATP-binding RNA helicase involved in the biogenesis of 60S ribosomal subunits. Binds 90S pre-ribosomal particles and dissociates from pre-60S ribosomal particles after processing of 27SB pre-rRNA. Required for the normal formation of 18S rRNA through the processing of pre-rRNAs at sites A0, A1 and A2, and the normal formation of 25S and 5.8S rRNAs through the processing of pre-rRNAs at sites C1 and C2. This chain is ATP-dependent rRNA helicase SPB4, found in Debaryomyces hansenii (strain ATCC 36239 / CBS 767 / BCRC 21394 / JCM 1990 / NBRC 0083 / IGC 2968) (Yeast).